We begin with the raw amino-acid sequence, 432 residues long: Protein distal antenna-related (432 aa).

One can recognise an HTH psq-type domain in the interval 15-66 (TRGKRPLRNLTPNDKVRAIQRIHNGETKASVSRDLGVPESTLRGWCKNEQKL). Residues 42–62 (KASVSRDLGVPESTLRGWCKN) constitute a DNA-binding region (H-T-H motif). 2 disordered regions span residues 195-221 (ESADTDIKSPQSTTDITDTAREENSTK) and 401-432 (SCASVSSRNNSRSQTPDKSTATSIACLSDGEQ). Polar residues-rich tracts occupy residues 202–211 (KSPQSTTDIT) and 401–425 (SCASVSSRNNSRSQTPDKSTATSIA).

Interacts with itself, dan, ey and dac to form a complex (or complexes) containing the RD factors.

It is found in the nucleus. Its function is as follows. Probable transcription factor with a role in the retinal determination (RD) network. Regulates ato expression and is required for normal R8 induction and differentiation. Danr appears to repress Dan expression, but Dan is required for Danr expression anterior to the morphogenetic furrow (MF). Dan and Danr lie downstream of so and require dac function for highest levels of expression. Contributes to differentiation of antenna-specific characteristics; effector gene that acts downstream of homothorax (hth), Distal-less (Dll), cut (ct) and spineless (ss) genes to control differentiation of distal antennal structures. This is Protein distal antenna-related from Drosophila pseudoobscura pseudoobscura (Fruit fly).